Reading from the N-terminus, the 451-residue chain is Trigger factor (451 aa).

A PPIase FKBP-type domain is found at Asp165–Leu250.

The protein belongs to the FKBP-type PPIase family. Tig subfamily.

The protein localises to the cytoplasm. It catalyses the reaction [protein]-peptidylproline (omega=180) = [protein]-peptidylproline (omega=0). Involved in protein export. Acts as a chaperone by maintaining the newly synthesized protein in an open conformation. Functions as a peptidyl-prolyl cis-trans isomerase. This is Trigger factor from Helicobacter pylori (strain G27).